The primary structure comprises 207 residues: NADH-quinone oxidoreductase subunit C (207 aa).

The protein belongs to the complex I 30 kDa subunit family. NDH-1 is composed of 14 different subunits. Subunits NuoB, C, D, E, F, and G constitute the peripheral sector of the complex.

The protein localises to the cell inner membrane. The enzyme catalyses a quinone + NADH + 5 H(+)(in) = a quinol + NAD(+) + 4 H(+)(out). Functionally, NDH-1 shuttles electrons from NADH, via FMN and iron-sulfur (Fe-S) centers, to quinones in the respiratory chain. The immediate electron acceptor for the enzyme in this species is believed to be ubiquinone. Couples the redox reaction to proton translocation (for every two electrons transferred, four hydrogen ions are translocated across the cytoplasmic membrane), and thus conserves the redox energy in a proton gradient. This Jannaschia sp. (strain CCS1) protein is NADH-quinone oxidoreductase subunit C.